Consider the following 170-residue polypeptide: Adenine phosphoribosyltransferase (170 aa).

The protein belongs to the purine/pyrimidine phosphoribosyltransferase family. In terms of assembly, homodimer.

The protein resides in the cytoplasm. The enzyme catalyses AMP + diphosphate = 5-phospho-alpha-D-ribose 1-diphosphate + adenine. It functions in the pathway purine metabolism; AMP biosynthesis via salvage pathway; AMP from adenine: step 1/1. In terms of biological role, catalyzes a salvage reaction resulting in the formation of AMP, that is energically less costly than de novo synthesis. In Fusobacterium nucleatum subsp. nucleatum (strain ATCC 25586 / DSM 15643 / BCRC 10681 / CIP 101130 / JCM 8532 / KCTC 2640 / LMG 13131 / VPI 4355), this protein is Adenine phosphoribosyltransferase.